A 595-amino-acid polypeptide reads, in one-letter code: Arginine--tRNA ligase (595 aa).

The short motif at 132-142 (ANPTGPLHVGH) is the 'HIGH' region element.

The protein belongs to the class-I aminoacyl-tRNA synthetase family. Monomer.

Its subcellular location is the cytoplasm. It carries out the reaction tRNA(Arg) + L-arginine + ATP = L-arginyl-tRNA(Arg) + AMP + diphosphate. The polypeptide is Arginine--tRNA ligase (Cupriavidus pinatubonensis (strain JMP 134 / LMG 1197) (Cupriavidus necator (strain JMP 134))).